The following is a 339-amino-acid chain: Phosphate acyltransferase (339 aa).

Belongs to the PlsX family. Homodimer. Probably interacts with PlsY.

Its subcellular location is the cytoplasm. It carries out the reaction a fatty acyl-[ACP] + phosphate = an acyl phosphate + holo-[ACP]. Its pathway is lipid metabolism; phospholipid metabolism. Catalyzes the reversible formation of acyl-phosphate (acyl-PO(4)) from acyl-[acyl-carrier-protein] (acyl-ACP). This enzyme utilizes acyl-ACP as fatty acyl donor, but not acyl-CoA. The sequence is that of Phosphate acyltransferase from Moorella thermoacetica (strain ATCC 39073 / JCM 9320).